Consider the following 711-residue polypeptide: Cyclomaltodextrin glucanotransferase (711 aa).

An N-terminal signal peptide occupies residues 1–31 (MRRWLSLVLSMSFVFSAIFIVSDTQKVTVEA). The A1 stretch occupies residues 32–165 (AGNLNKVNFT…GIKVIIDFAP (134 aa)). Residues aspartate 55, asparagine 57, asparagine 60, and asparagine 61 each contribute to the Ca(2+) site. Residues cysteine 71 and cysteine 78 are joined by a disulfide bond. Positions 79 and 81 each coordinate Ca(2+). 127–128 (YW) lines the substrate pocket. Asparagine 166 is a binding site for Ca(2+). Residues 166-229 (NHTSPASETN…NLFDLADLNH (64 aa)) are b. Position 167 (histidine 167) interacts with substrate. Isoleucine 217 contacts Ca(2+). 220-223 (NLFD) is a binding site for substrate. Ca(2+) is bound at residue aspartate 226. Residues 230-433 (QNPVIDRYLK…LRRNNPALAY (204 aa)) form an A2 region. Arginine 254 lines the substrate pocket. Aspartate 256 functions as the Nucleophile in the catalytic mechanism. A substrate-binding site is contributed by 259–260 (KH). Residue histidine 260 coordinates Ca(2+). Glutamate 284 serves as the catalytic Proton donor. 3 residues coordinate substrate: histidine 354, aspartate 398, and arginine 402. Residues 434 to 522 (GDTEQRWING…EVGVWAYSAT (89 aa)) are c. The tract at residues 523 to 606 (ESTPIIGHVG…SAAYDNFEVL (84 aa)) is d. The region spanning 526 to 604 (PIIGHVGPMM…QTSAAYDNFE (79 aa)) is the IPT/TIG domain. One can recognise a CBM20 domain in the interval 605 to 711 (VLTNDQVSVR…TGKIIVDWQN (107 aa)). The segment at 607–711 (TNDQVSVRFV…TGKIIVDWQN (105 aa)) is e.

Belongs to the glycosyl hydrolase 13 family. In terms of assembly, monomer. Requires Ca(2+) as cofactor.

It is found in the secreted. It catalyses the reaction Cyclizes part of a (1-&gt;4)-alpha-D-glucan chain by formation of a (1-&gt;4)-alpha-D-glucosidic bond.. This Geobacillus stearothermophilus (Bacillus stearothermophilus) protein is Cyclomaltodextrin glucanotransferase (cgt).